Reading from the N-terminus, the 432-residue chain is MSLNIETTQGLERRVAITVPTEIVSKAVREEFKRAAKNVRVDGFRKGHVPAHIIEQRFGASIRQDVLNDLLPRHFFDAVIAEKINIAGRPTFAIETFEEGKDLVFTATFEVYPEVKLQGLENIKVEKPTVEITEADIDKMIDVLRKQQATWAESQDVVKADDRVTIDFVGSVDGEEFEGGKATDFVLFMGQGRMIPGFEEGIIGHKAGEQFDIDVTFPAEYHAENLKGKAAKFAITLKKIENMVLPELTDEFVAKFGPNTKSVADLRAEIRKNMERELKNALVSRVKQQVINGLIEQNPIDVPASAVEEEINVLRNQAAQRFGGNAQQTAQLPRELFEAEATRRVQVGLLFSEVIKSNELKADEERAKAMIADIASAYEQPAEVVEYYSKNEELMNNIRNVVLEEQAVDAVLAKAQVTEKVSSFDEIMNPQA.

Residues 161-246 (DDRVTIDFVG…LKKIENMVLP (86 aa)) enclose the PPIase FKBP-type domain.

The protein belongs to the FKBP-type PPIase family. Tig subfamily.

The protein localises to the cytoplasm. The catalysed reaction is [protein]-peptidylproline (omega=180) = [protein]-peptidylproline (omega=0). Functionally, involved in protein export. Acts as a chaperone by maintaining the newly synthesized protein in an open conformation. Functions as a peptidyl-prolyl cis-trans isomerase. The protein is Trigger factor of Haemophilus influenzae (strain PittEE).